A 147-amino-acid chain; its full sequence is Ubiquitin-like-conjugating enzyme ATG10 (147 aa).

Catalysis depends on C116, which acts as the Glycyl thioester intermediate.

It belongs to the ATG10 family. As to quaternary structure, forms homooligomers. Interacts with ATG10. Interacts with ATG7 and ATG12.

Its subcellular location is the preautophagosomal structure membrane. E2-like enzyme required for the cytoplasm to vacuole transport (Cvt), autophagy and nucleophagy. Acts as an E2-like enzyme that catalyzes the conjugation of ATG12 to ATG5. ATG12 conjugation to ATG5 is required for proper localization of ATG8 to the preautophagosomal structure (PAS). Likely serves as an ATG5-recognition molecule. The protein is Ubiquitin-like-conjugating enzyme ATG10 of Kluyveromyces marxianus (strain DMKU3-1042 / BCC 29191 / NBRC 104275) (Yeast).